Here is a 489-residue protein sequence, read N- to C-terminus: Mitogen-activated protein kinase adapter protein MST50 (489 aa).

The interval 1-56 (MSFNTGTAYAESDADDEYERDIHDSSPIDATDAEASPTESDPPSNEHTPTTYGYRS) is disordered. Positions 37–54 (PTESDPPSNEHTPTTYGY) are enriched in polar residues. Residues 69–132 (WTADECADFI…LRSVYDVKKA (64 aa)) enclose the SAM domain. 2 disordered regions span residues 207-285 (PLPH…AAER) and 309-379 (SINI…GSNA). Polar residues-rich tracts occupy residues 256 to 265 (PKATSPTHLQ) and 328 to 346 (ASRS…STFA). One can recognise a Ras-associating domain in the interval 377–457 (SNASVEIFKS…PMFMLRKTNN (81 aa)).

In terms of assembly, interacts with MST7 and MST11. Interacts with MCK1, MKK2 and HIK1.

Mitogen-activated protein kinase adapter protein; part of the MST11-MST7-PMK1 MAP kinase (MAPK) cascade that is essential for appressorium formation, penetration and invasive growth. Binds to the MAPKKK MST11 and the MAPKK MST7 to maintain the stability of the MST11-MST7 complex for the phosphorylation of the MAPK PMK1. Is also involved in the MPS1 and OSM1 MAPK pathways, and especially plays a role in the activation of MPS1 in response to cell wall stress. Its function differs in the 3 MAPK pathways. The polypeptide is Mitogen-activated protein kinase adapter protein MST50 (Pyricularia oryzae (strain 70-15 / ATCC MYA-4617 / FGSC 8958) (Rice blast fungus)).